The chain runs to 602 residues: Fumarate reductase flavoprotein subunit (602 aa).

FAD contacts are provided by residues 12-16 (GAGGA), 36-38 (ISK), 44-52 (SHTVAAEGG), 156-158 (HFV), 192-193 (AT), and Asp-212. Position 45 is a tele-8alpha-FAD histidine (His-45). Active-site residues include His-233 and Arg-249. FAD-binding positions include 356–357 (HY), Glu-380, and 391–397 (RLGSNSL). Residues 581–602 (YGGEADAADKAEAANKKEKANG) are disordered. Basic and acidic residues predominate over residues 587–602 (AADKAEAANKKEKANG).

This sequence belongs to the FAD-dependent oxidoreductase 2 family. FRD/SDH subfamily. Part of an enzyme complex containing four subunits: a flavoprotein (FrdA), an iron-sulfur protein (FrdB), and two hydrophobic anchor proteins (FrdC and FrdD). Can be cross-linked to SdhE. Purified from membrane fractions associated with protoporphyrinogen IX dehydrogenase (hemG). Requires FAD as cofactor.

Its subcellular location is the cell inner membrane. The enzyme catalyses a quinone + succinate = fumarate + a quinol. The catalysed reaction is a menaquinone + succinate = a menaquinol + fumarate. Its activity is regulated as follows. Inhibited by oxaloacetate, a substrate analog. Its function is as follows. Two distinct, membrane-bound, FAD-containing enzymes are responsible for the catalysis of fumarate and succinate interconversion; fumarate reductase is used during anaerobic growth, and succinate dehydrogenase is used during aerobic growth. The QFR enzyme complex binds 2 quinones in or near the membrane; 1 near the [3Fe-4S] cluster (QP is proximal to the [3Fe-4S] cluster, on the cytoplasmic side of the membrane) while QD (the distal cluster) is on the other side of the membrane. It is not clear if both of the quinol-binding sites are functionally relevant. This chain is Fumarate reductase flavoprotein subunit (frdA), found in Escherichia coli (strain K12).